Reading from the N-terminus, the 337-residue chain is 2-oxoglutarate-dependent dioxygenase 19 (337 aa).

The interval 1–25 (MVAPSRLPSHEEQSAAAAADGSATP) is disordered. The region spanning 179–283 (NLESCFQILV…RMSFVSLIGP (105 aa)) is the Fe2OG dioxygenase domain. Fe cation contacts are provided by His-208, Asp-210, and His-264. 2-oxoglutarate is bound at residue Arg-274.

Belongs to the iron/ascorbate-dependent oxidoreductase family. The cofactor is Fe(2+). It depends on L-ascorbate as a cofactor. As to expression, expressed in shoots.

It is found in the cytoplasm. The catalysed reaction is melatonin + 2-oxoglutarate + O2 = 2-hydroxymelatonin + succinate + CO2. Involved in melatonin degradation. Catalyzes the hydroxylation of melatonin to produce 2-hydroxymelatonin. The chain is 2-oxoglutarate-dependent dioxygenase 19 from Oryza sativa subsp. japonica (Rice).